Here is a 119-residue protein sequence, read N- to C-terminus: Ribonuclease P protein component (119 aa).

It belongs to the RnpA family. As to quaternary structure, consists of a catalytic RNA component (M1 or rnpB) and a protein subunit.

The enzyme catalyses Endonucleolytic cleavage of RNA, removing 5'-extranucleotides from tRNA precursor.. Functionally, RNaseP catalyzes the removal of the 5'-leader sequence from pre-tRNA to produce the mature 5'-terminus. It can also cleave other RNA substrates such as 4.5S RNA. The protein component plays an auxiliary but essential role in vivo by binding to the 5'-leader sequence and broadening the substrate specificity of the ribozyme. The sequence is that of Ribonuclease P protein component from Citrobacter koseri (strain ATCC BAA-895 / CDC 4225-83 / SGSC4696).